The chain runs to 388 residues: tRNA-specific adenosine deaminase 1 (388 aa).

Positions cysteine 63 to isoleucine 388 constitute an A to I editase domain. Histidine 89 provides a ligand contact to Zn(2+). The active-site Proton donor is glutamate 91. Arginine 96 contacts 1D-myo-inositol hexakisphosphate. The Zn(2+) site is built by cysteine 144 and cysteine 201. Residues lysine 204, lysine 357, and arginine 363 each coordinate 1D-myo-inositol hexakisphosphate.

The protein belongs to the ADAT1 family. 1D-myo-inositol hexakisphosphate serves as cofactor. Requires Zn(2+) as cofactor.

Its subcellular location is the cytoplasm. It is found in the nucleus. It catalyses the reaction adenosine(37) in tRNA(Ala) + H2O + H(+) = inosine(37) in tRNA(Ala) + NH4(+). Its function is as follows. Deaminates adenosine-37 to inosine in tRNA-Ala. In Schizosaccharomyces pombe (strain 972 / ATCC 24843) (Fission yeast), this protein is tRNA-specific adenosine deaminase 1.